Reading from the N-terminus, the 532-residue chain is Telomerase Cajal body protein 1 (532 aa).

The interval 1-53 is disordered; that stretch reads MKTSEERLLAPDSLPPDLAPAPVPQGSPAEKNTDFEPVPPPCGGDDQPQLATD. Pro residues predominate over residues 13 to 25; sequence SLPPDLAPAPVPQ. Phosphoserine is present on residues serine 27, serine 61, and serine 83. The interval 80-122 is disordered; sequence SELSPGIEEQDVSEHASLPGEETNLPELESGEATEGVSEERAE. WD repeat units follow at residues 151–190, 206–251, 256–297, 307–348, 349–389, and 395–434; these read RSEN…YSEQ, EGDT…LRAS, NHLD…RDCE, GQSG…ALLG, GHQG…HLLW, and VTTN…SDDS. A Phosphothreonine modification is found at threonine 474. The residue at position 476 (serine 476) is a Phosphoserine. Residues 510 to 532 are disordered; that stretch reads DPSSPVDDQDEKGQRRTEAVGMS. Basic and acidic residues predominate over residues 520-532; that stretch reads EKGQRRTEAVGMS.

The protein belongs to the TCAB1 family. In terms of assembly, component of the telomerase holoenzyme complex composed of one molecule of TERT, one molecule of WRAP53/TCAB1, two molecules of H/ACA ribonucleoprotein complex subunits DKC1, NOP10, NHP2 and GAR1, and a telomerase RNA template component (TERC). The telomerase holoenzyme complex is associated with TEP1, SMG6/EST1A and POT1. Interacts with the chaperonin-containing T-complex (TRiC) complex; which mediates the folding of WRAP53/TCAB1. Interacts with COIL. Interacts with SMN1. Interacts with RNF8. Interacts with histone H2AX. Phosphorylated at Ser-61 by ATM in response to DNA damage, promoting its interaction with histone H2AX and localization to sites of DNA double-strand breaks.

The protein localises to the nucleus. Its subcellular location is the cajal body. It localises to the chromosome. The protein resides in the telomere. Its function is as follows. RNA chaperone that plays a key role in telomere maintenance and RNA localization to Cajal bodies. Specifically recognizes and binds the Cajal body box (CAB box) present in both small Cajal body RNAs (scaRNAs) and telomerase RNA template component (TERC). Essential component of the telomerase holoenzyme complex, a ribonucleoprotein complex essential for the replication of chromosome termini that elongates telomeres in most eukaryotes. In the telomerase holoenzyme complex, required to stimulate the catalytic activity of the complex. Acts by specifically binding the CAB box of the TERC RNA and controlling the folding of the CR4/CR5 region of the TERC RNA, a critical step for telomerase activity. In addition, also controls telomerase holoenzyme complex localization to Cajal body. During S phase, required for delivery of TERC to telomeres during S phase and for telomerase activity. In addition to its role in telomere maintenance, also required for Cajal body formation, probably by mediating localization of scaRNAs to Cajal bodies. Also plays a role in DNA repair: phosphorylated by ATM in response to DNA damage and relocalizes to sites of DNA double-strand breaks to promote the repair of DNA double-strand breaks. Acts by recruiting the ubiquitin ligase RNF8 to DNA breaks and promote both homologous recombination (HR) and non-homologous end joining (NHEJ). The sequence is that of Telomerase Cajal body protein 1 from Mus musculus (Mouse).